A 146-amino-acid polypeptide reads, in one-letter code: Lysozyme-like protein 4 (146 aa).

Residues 1–19 (MKASVVLSLLGYLVVPSGA) form the signal peptide. Residues 20 to 146 (YILGRCTVAK…LARWLDGCKL (127 aa)) form the C-type lysozyme domain. Disulfide bonds link C25–C144, C49–C131, C84–C96, and C92–C110. The active site involves E54.

The protein belongs to the glycosyl hydrolase 22 family. In terms of assembly, monomer. Expressed in testis and epididymis.

It localises to the secreted. Its subcellular location is the cytoplasmic vesicle. It is found in the secretory vesicle. The protein resides in the acrosome. The protein localises to the cell projection. It localises to the cilium. Its subcellular location is the flagellum. May be involved in fertilization. Has no detectable bacteriolytic and lysozyme activities in vitro. This is Lysozyme-like protein 4 (LYZL4) from Homo sapiens (Human).